We begin with the raw amino-acid sequence, 143 residues long: Transcriptional regulator MraZ (143 aa).

SpoVT-AbrB domains follow at residues 5-47 (EYRH…TQEE) and 76-119 (ATEC…SEDR).

Belongs to the MraZ family. As to quaternary structure, forms oligomers.

It localises to the cytoplasm. Its subcellular location is the nucleoid. The sequence is that of Transcriptional regulator MraZ from Ligilactobacillus salivarius (strain UCC118) (Lactobacillus salivarius).